Here is a 92-residue protein sequence, read N- to C-terminus: Small ribosomal subunit protein uS19c (92 aa).

It belongs to the universal ribosomal protein uS19 family.

The protein localises to the plastid. It localises to the chloroplast. In terms of biological role, protein S19 forms a complex with S13 that binds strongly to the 16S ribosomal RNA. This chain is Small ribosomal subunit protein uS19c, found in Acorus calamus (Sweet flag).